We begin with the raw amino-acid sequence, 309 residues long: Jacalin-related lectin 25 (309 aa).

The Jacalin-type lectin domain occupies Met-8 to Pro-190.

It belongs to the jacalin lectin family.

The sequence is that of Jacalin-related lectin 25 (JAL25) from Arabidopsis thaliana (Mouse-ear cress).